A 307-amino-acid polypeptide reads, in one-letter code: MKENLILKESEVIRILYPPGIVQTDDCYLDEEGRIYTTDTICEGTHFRIEWSGPKEIAQKLVEVNVSDIAAGGGIPTKAFLNLGLSTQCSKEEWILPFSISLQESLSSYNIELCGGDTYRSSSLNLTLTLIGVTTKPWKRSGGKDGDFLYLTGSVGLSLLGYKILKEGLDIPEPLRSLALERHLTPKARLKVSKELSKNSPVSCCMDLTDGLLLDLPKLASSSNLGLKIDLEKIPILSNILTYLSLGEVLSSGEELELIFLSPVELPKTLCETSLTKIGNTTSDWKGVKFFQGNSEKTFEHLGFEHF.

Mg(2+)-binding residues include Asp-26, Thr-37, Thr-38, and Asp-39. Position 46 (His-46) interacts with substrate. Positions 68 and 117 each coordinate Mg(2+). ATP is bound by residues 116–117 (GD) and Arg-140. Asp-207 contacts Mg(2+). Thr-209 is an ATP binding site. Position 210 (Asp-210) interacts with Mg(2+). Substrate is bound by residues Glu-254 and Phe-304.

This sequence belongs to the thiamine-monophosphate kinase family.

The enzyme catalyses thiamine phosphate + ATP = thiamine diphosphate + ADP. The protein operates within cofactor biosynthesis; thiamine diphosphate biosynthesis; thiamine diphosphate from thiamine phosphate: step 1/1. In terms of biological role, catalyzes the ATP-dependent phosphorylation of thiamine-monophosphate (TMP) to form thiamine-pyrophosphate (TPP), the active form of vitamin B1. This Leptospira interrogans serogroup Icterohaemorrhagiae serovar Lai (strain 56601) protein is Thiamine-monophosphate kinase.